The sequence spans 495 residues: MSESNELIEQRIQKIEELKKQGINPYPVRFFPDSKSKDIAEKFEKNPTGPETKFKLGGRLHSKRVMGKASFAHLKDNSGIIQLYATKDDLGETQYSIFKSLDLGDIIGLEGYLFKTQKGEITLHVTSVELLSKCIRPLPVVKEKDGVVYDAFADVEQRYRMRYVDLIVNDHVRDTFITRSKIVSEIRSFLTQEGFLEVETPMMQPIAGGAAARPFVTHHNTLDMQLFLRIAPELYLKRLIVGGMDRVFELNRNFRNEGISTKHNPEFTMMEAYMAFGDMSTMLDLTERLITHLAQKICGTLKIQYGKDLIDLSPPWKRTTYVDIIKEYSGIDFSQIISLEEAKKKASELKVDVSKCQTIWKVADEVFSEKAEPNLIQPIFITDYPKELSPLAKSNPDKPGYVERFEPYVAGREIGNAFTELNDPFDQKERFEDQVKQREAGDDEAFMMDEDYIRALEYGMPPTGGLGIGIDRLVMLLTNSHSIRDTILFPLMRPE.

2 residues coordinate Mg(2+): glutamate 406 and glutamate 413.

The protein belongs to the class-II aminoacyl-tRNA synthetase family. Homodimer. It depends on Mg(2+) as a cofactor.

The protein localises to the cytoplasm. It carries out the reaction tRNA(Lys) + L-lysine + ATP = L-lysyl-tRNA(Lys) + AMP + diphosphate. This is Lysine--tRNA ligase from Leptospira interrogans serogroup Icterohaemorrhagiae serovar copenhageni (strain Fiocruz L1-130).